Here is a 415-residue protein sequence, read N- to C-terminus: Gamma-glutamyl phosphate reductase (415 aa).

Belongs to the gamma-glutamyl phosphate reductase family.

Its subcellular location is the cytoplasm. The catalysed reaction is L-glutamate 5-semialdehyde + phosphate + NADP(+) = L-glutamyl 5-phosphate + NADPH + H(+). Its pathway is amino-acid biosynthesis; L-proline biosynthesis; L-glutamate 5-semialdehyde from L-glutamate: step 2/2. Its function is as follows. Catalyzes the NADPH-dependent reduction of L-glutamate 5-phosphate into L-glutamate 5-semialdehyde and phosphate. The product spontaneously undergoes cyclization to form 1-pyrroline-5-carboxylate. The chain is Gamma-glutamyl phosphate reductase from Bacillus velezensis (strain DSM 23117 / BGSC 10A6 / LMG 26770 / FZB42) (Bacillus amyloliquefaciens subsp. plantarum).